The primary structure comprises 321 residues: uncharacterized protein (321 aa).

ATP is bound at residue 28 to 35; that stretch reads GPINSGKT.

The protein belongs to the archaeal ATPase family.

This is an uncharacterized protein from Pyrococcus horikoshii (strain ATCC 700860 / DSM 12428 / JCM 9974 / NBRC 100139 / OT-3).